Consider the following 302-residue polypeptide: UDP-N-acetylenolpyruvoylglucosamine reductase (302 aa).

In terms of domain architecture, FAD-binding PCMH-type spans 32–195 (LGGPADLLAR…VTVTLELVPD (164 aa)). Residue Arg-175 is part of the active site. Catalysis depends on Ser-224, which acts as the Proton donor. The active site involves Glu-294.

It belongs to the MurB family. FAD is required as a cofactor.

It is found in the cytoplasm. It carries out the reaction UDP-N-acetyl-alpha-D-muramate + NADP(+) = UDP-N-acetyl-3-O-(1-carboxyvinyl)-alpha-D-glucosamine + NADPH + H(+). It participates in cell wall biogenesis; peptidoglycan biosynthesis. Its function is as follows. Cell wall formation. The sequence is that of UDP-N-acetylenolpyruvoylglucosamine reductase from Moorella thermoacetica (strain ATCC 39073 / JCM 9320).